Consider the following 607-residue polypeptide: UvrABC system protein C (607 aa).

One can recognise a GIY-YIG domain in the interval 16 to 94 (GRPGVYRMFD…IKEWRPPYNI (79 aa)). The UVR domain maps to 203 to 238 (HALTNELSTAMEEAAINLEFERAAELRDQIALLRRV).

It belongs to the UvrC family. As to quaternary structure, interacts with UvrB in an incision complex.

The protein localises to the cytoplasm. The UvrABC repair system catalyzes the recognition and processing of DNA lesions. UvrC both incises the 5' and 3' sides of the lesion. The N-terminal half is responsible for the 3' incision and the C-terminal half is responsible for the 5' incision. In Pseudomonas fluorescens (strain Pf0-1), this protein is UvrABC system protein C.